The chain runs to 286 residues: NADP-dependent dehydrogenase clz5 (286 aa).

Residues S49, L51, D93, Y207, K211, I241, and Q245 each coordinate NADP(+). Y207 (proton acceptor) is an active-site residue. Residue Y207 is the Proton donor of the active site. The active-site Lowers pKa of active site Tyr is the K211.

This sequence belongs to the short-chain dehydrogenases/reductases (SDR) family. In terms of assembly, homodimer.

It is found in the cytoplasm. The protein resides in the cytosol. It functions in the pathway secondary metabolite biosynthesis. Functionally, NADP-dependent dehydrogenase; part of the gene cluster that mediates the biosynthesis of squalestatin S1 (SQS1, also known as zaragozic acid A), a heavily oxidized fungal polyketide that offers potent cholesterol lowering activity by targeting squalene synthase (SS). SQS1 is composed of a 2,8-dioxobicyclic[3.2.1]octane-3,4,5-tricarboxyclic acid core that is connected to two lipophilic polyketide arms. These initial steps feature the priming of an unusual benzoic acid starter unit onto the highly reducing polyketide synthase clz14, followed by oxaloacetate extension and product release to generate a tricarboxylic acid containing product. The phenylalanine ammonia lyase (PAL) clz10 and the acyl-CoA ligase clz12 are involved in transforming phenylalanine into benzoyl-CoA. The citrate synthase-like protein clz17 is involved in connecting the C-alpha-carbons of the hexaketide chain and oxaloacetate to afford the tricarboxylic acid unit. The potential hydrolytic enzymes, clz11 and clz13, are in close proximity to pks2 and may participate in product release. On the other side, the tetraketide arm is synthesized by a the squalestatin tetraketide synthase clz2 and enzymatically esterified to the core in the last biosynthetic step, by the acetyltransferase clz6. The biosynthesis of the tetraketide must involve 3 rounds of chain extension. After the first and second rounds methyl-transfer occurs, and in all rounds of extension the ketoreductase and dehydratase are active. The enoyl reductase and C-MeT of clz2 are not active in the final round of extension. The acetyltransferase clz6 appears to have a broad substrate selectivity for its acyl CoA substrate, allowing the in vitro synthesis of novel squalestatins. The biosynthesis of SQS1 requires several oxidative steps likely performed by oxidoreductases clz3, clz15 and clz16. Finally, in support of the identification of the cluster as being responsible for SQS1 production, the cluster contains a gene encoding a putative squalene synthase (SS) clz20, suggesting a likely mechanism for self-resistance. This Cochliobolus lunatus (Filamentous fungus) protein is NADP-dependent dehydrogenase clz5.